A 76-amino-acid polypeptide reads, in one-letter code: MGGLSIWHWLIVLLIVALVFGTKKLRNIGNDLGSAVKGFKDGMKEGEAPADAQQLPRSGSVDVNAKETTRSDSNKA.

A helical transmembrane segment spans residues 1 to 21; sequence MGGLSIWHWLIVLLIVALVFG. A disordered region spans residues 43-76; it reads MKEGEAPADAQQLPRSGSVDVNAKETTRSDSNKA. A compositionally biased stretch (basic and acidic residues) spans 64 to 76; sequence NAKETTRSDSNKA.

This sequence belongs to the TatA/E family. As to quaternary structure, the Tat system comprises two distinct complexes: a TatABC complex, containing multiple copies of TatA, TatB and TatC subunits, and a separate TatA complex, containing only TatA subunits. Substrates initially bind to the TatABC complex, which probably triggers association of the separate TatA complex to form the active translocon.

The protein localises to the cell inner membrane. Its function is as follows. Part of the twin-arginine translocation (Tat) system that transports large folded proteins containing a characteristic twin-arginine motif in their signal peptide across membranes. TatA could form the protein-conducting channel of the Tat system. The protein is Sec-independent protein translocase protein TatA of Burkholderia lata (strain ATCC 17760 / DSM 23089 / LMG 22485 / NCIMB 9086 / R18194 / 383).